The following is a 607-amino-acid chain: Thymidine kinase (607 aa).

2 disordered regions span residues 1 to 160 (MAGF…ADST) and 180 to 215 (DDKS…PSGL). Residues 17-32 (KCQEDESPENERHENF) show a composition bias toward basic and acidic residues. 3 stretches are compositionally biased toward polar residues: residues 88 to 106 (AAVT…TSCP), 148 to 160 (RKTS…ADST), and 194 to 203 (RRPSSHSALK). 291 to 298 (GAPGVGKT) provides a ligand contact to ATP. E317 serves as the catalytic Proton acceptor. A substrate-binding site is contributed by Q355. R445 contributes to the ATP binding site. R451 is a substrate binding site.

The protein belongs to the herpesviridae thymidine kinase family. In terms of assembly, homodimer.

The protein localises to the virion tegument. It is found in the host nucleus. The enzyme catalyses thymidine + ATP = dTMP + ADP + H(+). Functionally, catalyzes the transfer of the gamma-phospho group of ATP to thymidine to generate dTMP in the salvage pathway of pyrimidine synthesis. The dTMP serves as a substrate for DNA polymerase during viral DNA replication. Allows the virus to be reactivated and to grow in non-proliferative cells lacking a high concentration of phosphorylated nucleic acid precursors. This Epstein-Barr virus (strain GD1) (HHV-4) protein is Thymidine kinase.